Consider the following 1007-residue polypeptide: Rho-type GTPase-activating protein 1 (1007 aa).

LIM zinc-binding domains are found at residues 13–66 and 70–122; these read CVRC…CFDC and CKNC…CLSC. 3 disordered regions span residues 203–293, 401–478, and 505–600; these read ITGY…KSPS, EKYS…STSL, and KETA…NDPS. Residues 212 to 221 show a composition bias toward low complexity; it reads NSGSSKFGSN. Composition is skewed to polar residues over residues 250–261 and 270–293; these read ANMSLNVATDPT and HSRNLLNKTPLRNSSGQYLAKSPS. Position 278 is a phosphothreonine (T278). S291 is modified (phosphoserine). The segment covering 411-421 has biased composition (basic residues); the sequence is KGRKISRSLSR. Over residues 454–466 the composition is skewed to basic and acidic residues; that stretch reads RSQDLMRDNDSHT. Polar residues-rich tracts occupy residues 467–478 and 529–579; these read GLDTPNSNSTSL and SPAT…LENS. A Phosphothreonine modification is found at T532. The span at 583-600 shows a compositional bias: basic and acidic residues; sequence EEQKETLYENSESRNDPS. One can recognise a Rho-GAP domain in the interval 791 to 1006; that stretch reads SSLVARCNYE…FIFGNYKDIL (216 aa).

Its function is as follows. GTPase-activating protein (GAP) for CDC42 and/or RHO1. Negative regulator of the pheromone-response pathway through the STE20 protein kinase; acts at a step between the G-protein and the MAP kinase module. Dominant suppressor of bud emergence defect caused by deletion of IPL2/BEM2. Involved in the control of polarized cell growth and proper bud site selection. The polypeptide is Rho-type GTPase-activating protein 1 (RGA1) (Saccharomyces cerevisiae (strain ATCC 204508 / S288c) (Baker's yeast)).